The primary structure comprises 1006 residues: Unconventional myosin-Id (1006 aa).

Ala-2 carries the N-acetylalanine modification. A Myosin motor domain is found at 9 to 695 (FGKADFVLMD…TLFTLEELRA (687 aa)). 102 to 109 (GESGAGKT) is a binding site for ATP. The residue at position 200 (Ser-200) is a Phosphoserine. Residue Tyr-536 is modified to Phosphotyrosine. Residues 572-594 (MIALVDNLASKEPYYVRCIKPND) form an actin-binding region. 2 IQ domains span residues 699–719 (VRVV…MRYK) and 721–741 (TKAA…SYIH). An interaction with calmodulin region spans residues 776-896 (LQSIFNRWRA…MDPTKQYKVM (121 aa)). One can recognise a TH1 domain in the interval 812–1005 (GQRADLGLQR…RSGFILSVPG (194 aa)).

The protein belongs to the TRAFAC class myosin-kinesin ATPase superfamily. Myosin family. In terms of assembly, interacts (via the two IQ motifs) with calmodulin. Binds an additional calmodulin chain via a third, C-terminal region. Interacts with F-actin. As to expression, detected on tracheal epithelial cells, and on epithelial cells and brush border cells in duodenum, jejunum and ileum. Detected on myelinated white matter in the cerebellum, and the myelinated part of the optic nerve. Detected on mature oligodendrocites. Detected on the outside of the myelin sheet that surrounds axons (at protein level). Ubiquitous. Highest levels in adult brain, and spinal cord. Moderate levels in lung, kidney, liver and spleen. Low levels in testis and heart (at protein level).

The protein resides in the cytoplasm. It localises to the perikaryon. It is found in the cell projection. Its subcellular location is the dendrite. The protein localises to the early endosome. The protein resides in the cell cortex. Functionally, unconventional myosin that functions as actin-based motor protein with ATPase activity. Plays a role in endosomal protein trafficking, and especially in the transfer of cargo proteins from early to recycling endosomes. Required for normal planar cell polarity in ciliated tracheal cells, for normal rotational polarity of cilia, and for coordinated, unidirectional ciliary movement in the trachea. Required for normal, polarized cilia organization in brain ependymal epithelial cells. The polypeptide is Unconventional myosin-Id (Myo1d) (Rattus norvegicus (Rat)).